We begin with the raw amino-acid sequence, 86 residues long: Polcalcin Che a 3 (86 aa).

EF-hand domains follow at residues 8–43 (QDIADRERIFKRFDTNGDGKISSSELGDALKTLGSV) and 43–78 (VTPDEVRRMMAEIDTDGDGFISFDEFTDFARANRGL). Residues D21, N23, D25, K27, E32, D56, D58, D60, and E67 each contribute to the Ca(2+) site.

The polypeptide is Polcalcin Che a 3 (Chenopodium album (Fat hen)).